We begin with the raw amino-acid sequence, 477 residues long: Ribulose bisphosphate carboxylase large chain (477 aa).

Positions 1–2 are excised as a propeptide; it reads MS. An N-acetylproline modification is found at proline 3. Position 14 is an N6,N6,N6-trimethyllysine (lysine 14). Substrate contacts are provided by asparagine 123 and threonine 173. The Proton acceptor role is filled by lysine 175. Lysine 177 lines the substrate pocket. Mg(2+)-binding residues include lysine 201, aspartate 203, and glutamate 204. Residue lysine 201 is modified to N6-carboxylysine. Histidine 294 serves as the catalytic Proton acceptor. 3 residues coordinate substrate: arginine 295, histidine 327, and serine 379.

This sequence belongs to the RuBisCO large chain family. Type I subfamily. As to quaternary structure, heterohexadecamer of 8 large chains and 8 small chains; disulfide-linked. The disulfide link is formed within the large subunit homodimers. Mg(2+) serves as cofactor. The disulfide bond which can form in the large chain dimeric partners within the hexadecamer appears to be associated with oxidative stress and protein turnover.

It is found in the plastid. It localises to the chloroplast. It carries out the reaction 2 (2R)-3-phosphoglycerate + 2 H(+) = D-ribulose 1,5-bisphosphate + CO2 + H2O. The catalysed reaction is D-ribulose 1,5-bisphosphate + O2 = 2-phosphoglycolate + (2R)-3-phosphoglycerate + 2 H(+). Functionally, ruBisCO catalyzes two reactions: the carboxylation of D-ribulose 1,5-bisphosphate, the primary event in carbon dioxide fixation, as well as the oxidative fragmentation of the pentose substrate in the photorespiration process. Both reactions occur simultaneously and in competition at the same active site. The sequence is that of Ribulose bisphosphate carboxylase large chain from Digitalis purpurea (Common foxglove).